The primary structure comprises 392 residues: Na(+)/H(+) antiporter NhaA (392 aa).

The next 11 membrane-spanning stretches (helical) occupy residues 14 to 34 (AGGL…NSPL), 59 to 79 (LLLW…GLEV), 95 to 115 (IFPA…YLLF), 125 to 145 (GWAI…ALLG), 154 to 174 (VFLL…IALF), 179 to 199 (VSLQ…YMNW), 213 to 233 (LVLW…GVIV), 254 to 274 (GLHP…NAGV), 287 to 307 (LLPL…IFLF), 328 to 348 (IFAV…IASL), and 363 to 383 (LGIL…LRLA).

The protein belongs to the NhaA Na(+)/H(+) (TC 2.A.33) antiporter family.

It is found in the cell inner membrane. The enzyme catalyses Na(+)(in) + 2 H(+)(out) = Na(+)(out) + 2 H(+)(in). Functionally, na(+)/H(+) antiporter that extrudes sodium in exchange for external protons. This chain is Na(+)/H(+) antiporter NhaA, found in Yersinia enterocolitica serotype O:8 / biotype 1B (strain NCTC 13174 / 8081).